Consider the following 340-residue polypeptide: Protein-arginine kinase (340 aa).

Positions 21-242 (VVLSSRIRLA…EQIIMQERVA (222 aa)) constitute a Phosphagen kinase C-terminal domain. ATP is bound by residues 24-28 (SSRIR), His-79, Arg-113, 164-168 (RASVM), and 195-200 (RGIYGE).

It belongs to the ATP:guanido phosphotransferase family.

It carries out the reaction L-arginyl-[protein] + ATP = N(omega)-phospho-L-arginyl-[protein] + ADP + H(+). In terms of biological role, catalyzes the specific phosphorylation of arginine residues in proteins. The chain is Protein-arginine kinase from Listeria monocytogenes serotype 4b (strain F2365).